The primary structure comprises 967 residues: Leucine--tRNA ligase (967 aa).

The 'HIGH' region motif lies at 43–53; the sequence is PYLSGHLHVGH. A 'KMSKS' region motif is present at residues 650–654; sequence KMSKS. Lys653 lines the ATP pocket.

It belongs to the class-I aminoacyl-tRNA synthetase family.

Its subcellular location is the cytoplasm. It catalyses the reaction tRNA(Leu) + L-leucine + ATP = L-leucyl-tRNA(Leu) + AMP + diphosphate. The polypeptide is Leucine--tRNA ligase (Pyrococcus furiosus (strain ATCC 43587 / DSM 3638 / JCM 8422 / Vc1)).